A 361-amino-acid polypeptide reads, in one-letter code: Phospho-N-acetylmuramoyl-pentapeptide-transferase (361 aa).

10 helical membrane-spanning segments follow: residues 21–41, 69–89, 93–113, 131–151, 168–188, 200–220, 240–260, 264–284, 289–309, and 338–358; these read YLTI…LMLG, VGTP…SILI, WSNI…AIGF, SIKF…IILI, IILP…IVGS, GLAI…AYFS, LFII…FNAY, IFMG…IAIL, ILLF…IIQV, and KIIV…LASI.

It belongs to the glycosyltransferase 4 family. MraY subfamily. Requires Mg(2+) as cofactor.

The protein localises to the cell inner membrane. It catalyses the reaction UDP-N-acetyl-alpha-D-muramoyl-L-alanyl-gamma-D-glutamyl-meso-2,6-diaminopimeloyl-D-alanyl-D-alanine + di-trans,octa-cis-undecaprenyl phosphate = di-trans,octa-cis-undecaprenyl diphospho-N-acetyl-alpha-D-muramoyl-L-alanyl-D-glutamyl-meso-2,6-diaminopimeloyl-D-alanyl-D-alanine + UMP. It participates in cell wall biogenesis; peptidoglycan biosynthesis. In terms of biological role, catalyzes the initial step of the lipid cycle reactions in the biosynthesis of the cell wall peptidoglycan: transfers peptidoglycan precursor phospho-MurNAc-pentapeptide from UDP-MurNAc-pentapeptide onto the lipid carrier undecaprenyl phosphate, yielding undecaprenyl-pyrophosphoryl-MurNAc-pentapeptide, known as lipid I. This is Phospho-N-acetylmuramoyl-pentapeptide-transferase from Vesicomyosocius okutanii subsp. Calyptogena okutanii (strain HA).